Consider the following 425-residue polypeptide: Serine--tRNA ligase (425 aa).

Thr-228 to Glu-230 is a binding site for L-serine. Arg-259–Glu-261 contacts ATP. Residue Glu-282 participates in L-serine binding. Glu-346–Ser-349 is an ATP binding site. Residue Ser-382 coordinates L-serine.

This sequence belongs to the class-II aminoacyl-tRNA synthetase family. Type-1 seryl-tRNA synthetase subfamily. As to quaternary structure, homodimer. The tRNA molecule binds across the dimer.

The protein resides in the cytoplasm. It catalyses the reaction tRNA(Ser) + L-serine + ATP = L-seryl-tRNA(Ser) + AMP + diphosphate + H(+). It carries out the reaction tRNA(Sec) + L-serine + ATP = L-seryl-tRNA(Sec) + AMP + diphosphate + H(+). It participates in aminoacyl-tRNA biosynthesis; selenocysteinyl-tRNA(Sec) biosynthesis; L-seryl-tRNA(Sec) from L-serine and tRNA(Sec): step 1/1. In terms of biological role, catalyzes the attachment of serine to tRNA(Ser). Is also able to aminoacylate tRNA(Sec) with serine, to form the misacylated tRNA L-seryl-tRNA(Sec), which will be further converted into selenocysteinyl-tRNA(Sec). In Rickettsia canadensis (strain McKiel), this protein is Serine--tRNA ligase.